We begin with the raw amino-acid sequence, 518 residues long: Glutamate--cysteine ligase (518 aa).

This sequence belongs to the glutamate--cysteine ligase type 1 family. Type 1 subfamily.

It carries out the reaction L-cysteine + L-glutamate + ATP = gamma-L-glutamyl-L-cysteine + ADP + phosphate + H(+). The protein operates within sulfur metabolism; glutathione biosynthesis; glutathione from L-cysteine and L-glutamate: step 1/2. This is Glutamate--cysteine ligase from Escherichia coli O127:H6 (strain E2348/69 / EPEC).